Here is a 412-residue protein sequence, read N- to C-terminus: Serine hydroxymethyltransferase (412 aa).

(6S)-5,6,7,8-tetrahydrofolate-binding positions include Leu-120 and 124-126 (GHL). At Lys-229 the chain carries N6-(pyridoxal phosphate)lysine. Residue 352-354 (SPF) participates in (6S)-5,6,7,8-tetrahydrofolate binding.

The protein belongs to the SHMT family. As to quaternary structure, homodimer. It depends on pyridoxal 5'-phosphate as a cofactor.

Its subcellular location is the cytoplasm. The enzyme catalyses (6R)-5,10-methylene-5,6,7,8-tetrahydrofolate + glycine + H2O = (6S)-5,6,7,8-tetrahydrofolate + L-serine. It participates in one-carbon metabolism; tetrahydrofolate interconversion. The protein operates within amino-acid biosynthesis; glycine biosynthesis; glycine from L-serine: step 1/1. Catalyzes the reversible interconversion of serine and glycine with tetrahydrofolate (THF) serving as the one-carbon carrier. This reaction serves as the major source of one-carbon groups required for the biosynthesis of purines, thymidylate, methionine, and other important biomolecules. Also exhibits THF-independent aldolase activity toward beta-hydroxyamino acids, producing glycine and aldehydes, via a retro-aldol mechanism. The chain is Serine hydroxymethyltransferase from Acetivibrio thermocellus (strain ATCC 27405 / DSM 1237 / JCM 9322 / NBRC 103400 / NCIMB 10682 / NRRL B-4536 / VPI 7372) (Clostridium thermocellum).